A 349-amino-acid polypeptide reads, in one-letter code: GTP 3',8-cyclase (349 aa).

Residues 24–250 (PFGRAVTYLR…DIPYRTGGPA (227 aa)) form the Radical SAM core domain. R33 serves as a coordination point for GTP. Residues C40 and C44 each contribute to the [4Fe-4S] cluster site. Y46 provides a ligand contact to S-adenosyl-L-methionine. C47 lines the [4Fe-4S] cluster pocket. R82 contributes to the GTP binding site. S-adenosyl-L-methionine is bound at residue G86. T116 contributes to the GTP binding site. Position 140 (S140) interacts with S-adenosyl-L-methionine. Residue K176 coordinates GTP. M210 serves as a coordination point for S-adenosyl-L-methionine. Residues C273 and C276 each coordinate [4Fe-4S] cluster. 278–280 (RVR) is a GTP binding site. C290 contributes to the [4Fe-4S] cluster binding site.

Belongs to the radical SAM superfamily. MoaA family. As to quaternary structure, monomer and homodimer. [4Fe-4S] cluster serves as cofactor.

It catalyses the reaction GTP + AH2 + S-adenosyl-L-methionine = (8S)-3',8-cyclo-7,8-dihydroguanosine 5'-triphosphate + 5'-deoxyadenosine + L-methionine + A + H(+). It participates in cofactor biosynthesis; molybdopterin biosynthesis. In terms of biological role, catalyzes the cyclization of GTP to (8S)-3',8-cyclo-7,8-dihydroguanosine 5'-triphosphate. The polypeptide is GTP 3',8-cyclase (Rhizobium meliloti (strain 1021) (Ensifer meliloti)).